The primary structure comprises 272 residues: tRNA pseudouridine synthase A (272 aa).

Aspartate 52 (nucleophile) is an active-site residue. Tyrosine 110 contacts substrate.

This sequence belongs to the tRNA pseudouridine synthase TruA family. In terms of assembly, homodimer.

It catalyses the reaction uridine(38/39/40) in tRNA = pseudouridine(38/39/40) in tRNA. In terms of biological role, formation of pseudouridine at positions 38, 39 and 40 in the anticodon stem and loop of transfer RNAs. The chain is tRNA pseudouridine synthase A from Cupriavidus necator (strain ATCC 17699 / DSM 428 / KCTC 22496 / NCIMB 10442 / H16 / Stanier 337) (Ralstonia eutropha).